Reading from the N-terminus, the 609-residue chain is Proteasome-associated ATPase (609 aa).

Positions 1–22 (MGESERSEAFNPPREAGMSSGD) are disordered. Residues 20–96 (SGDIAELEQL…LREEVDRLGQ (77 aa)) adopt a coiled-coil conformation. 296-301 (GCGKTL) lines the ATP pocket. Residues 608–609 (YL) are docks into pockets in the proteasome alpha-ring.

This sequence belongs to the AAA ATPase family. In terms of assembly, homohexamer. Assembles into a hexameric ring structure that caps the 20S proteasome core. Strongly interacts with the prokaryotic ubiquitin-like protein Pup through a hydrophobic interface; the interacting region of ARC lies in its N-terminal coiled-coil domain. There is one Pup binding site per ARC hexamer ring. Upon ATP-binding, the C-terminus of ARC interacts with the alpha-rings of the proteasome core, possibly by binding to the intersubunit pockets.

The protein operates within protein degradation; proteasomal Pup-dependent pathway. Functionally, ATPase which is responsible for recognizing, binding, unfolding and translocation of pupylated proteins into the bacterial 20S proteasome core particle. May be essential for opening the gate of the 20S proteasome via an interaction with its C-terminus, thereby allowing substrate entry and access to the site of proteolysis. Thus, the C-termini of the proteasomal ATPase may function like a 'key in a lock' to induce gate opening and therefore regulate proteolysis. The sequence is that of Proteasome-associated ATPase from Mycobacterium leprae (strain Br4923).